We begin with the raw amino-acid sequence, 475 residues long: Ataxin-10 (475 aa).

Arg-10 bears the Omega-N-methylarginine mark. Ser-12 bears the Phosphoserine; by AURKB mark. Position 77 is a phosphoserine; by PLK1 (Ser-77). Thr-82 carries the phosphothreonine; by PLK1 modification. Ser-430 is modified (phosphoserine).

The protein belongs to the ataxin-10 family. In terms of assembly, homooligomer. Interacts with GNB2. Interacts with IQCB1. Interacts with OGT. In terms of processing, polyubiquitinated. Phosphorylation at Ser-12 by AURKB promotes the association of ATXN10 with PLK1. Phosphorylation at Ser-77 and Thr-82 by PLK1 may play a role in the regulation of cytokinesis and may stimulate the proteasome-mediated degradation of ATXN10. In terms of tissue distribution, expressed in the central nervous system.

The protein resides in the cytoplasm. It localises to the perinuclear region. The protein localises to the midbody. Its subcellular location is the cytoskeleton. It is found in the cilium basal body. The protein resides in the microtubule organizing center. It localises to the centrosome. The protein localises to the centriole. Its function is as follows. May play a role in the regulation of cytokinesis. May play a role in signaling by stimulating protein glycosylation. Induces neuritogenesis by activating the Ras-MAP kinase pathway and is necessary for the survival of cerebellar neurons. Does not appear to play a major role in ciliogenesis. The sequence is that of Ataxin-10 (ATXN10) from Homo sapiens (Human).